The sequence spans 430 residues: Serine--tRNA ligase (430 aa).

L-serine is bound at residue 237 to 239; sequence TAE. 268–270 serves as a coordination point for ATP; that stretch reads RSE. E291 contacts L-serine. 355–358 provides a ligand contact to ATP; that stretch reads EISS. L-serine is bound at residue S391.

It belongs to the class-II aminoacyl-tRNA synthetase family. Type-1 seryl-tRNA synthetase subfamily. Homodimer. The tRNA molecule binds across the dimer.

The protein localises to the cytoplasm. It carries out the reaction tRNA(Ser) + L-serine + ATP = L-seryl-tRNA(Ser) + AMP + diphosphate + H(+). It catalyses the reaction tRNA(Sec) + L-serine + ATP = L-seryl-tRNA(Sec) + AMP + diphosphate + H(+). The protein operates within aminoacyl-tRNA biosynthesis; selenocysteinyl-tRNA(Sec) biosynthesis; L-seryl-tRNA(Sec) from L-serine and tRNA(Sec): step 1/1. Its function is as follows. Catalyzes the attachment of serine to tRNA(Ser). Is also able to aminoacylate tRNA(Sec) with serine, to form the misacylated tRNA L-seryl-tRNA(Sec), which will be further converted into selenocysteinyl-tRNA(Sec). The polypeptide is Serine--tRNA ligase (Salmonella paratyphi C (strain RKS4594)).